A 296-amino-acid chain; its full sequence is Light-independent protochlorophyllide reductase iron-sulfur ATP-binding protein (296 aa).

ATP is bound by residues 39–44 (GIGKST) and lysine 68. Serine 43 contacts Mg(2+). Residues cysteine 124 and cysteine 158 each coordinate [4Fe-4S] cluster. Residue 209-210 (NR) participates in ATP binding.

It belongs to the NifH/BchL/ChlL family. In terms of assembly, homodimer. Protochlorophyllide reductase is composed of three subunits; ChlL, ChlN and ChlB. Requires [4Fe-4S] cluster as cofactor.

The catalysed reaction is chlorophyllide a + oxidized 2[4Fe-4S]-[ferredoxin] + 2 ADP + 2 phosphate = protochlorophyllide a + reduced 2[4Fe-4S]-[ferredoxin] + 2 ATP + 2 H2O. It participates in porphyrin-containing compound metabolism; chlorophyll biosynthesis (light-independent). Functionally, component of the dark-operative protochlorophyllide reductase (DPOR) that uses Mg-ATP and reduced ferredoxin to reduce ring D of protochlorophyllide (Pchlide) to form chlorophyllide a (Chlide). This reaction is light-independent. The L component serves as a unique electron donor to the NB-component of the complex, and binds Mg-ATP. This is Light-independent protochlorophyllide reductase iron-sulfur ATP-binding protein from Prochlorococcus marinus (strain MIT 9211).